The primary structure comprises 390 residues: Phosphoglycerate kinase (390 aa).

Substrate-binding positions include 21 to 23 (DLN), Arg-36, 59 to 62 (HLGR), Arg-114, and Arg-147. ATP contacts are provided by residues Lys-198, Glu-314, and 340–343 (GGDT).

It belongs to the phosphoglycerate kinase family. As to quaternary structure, monomer.

Its subcellular location is the cytoplasm. The catalysed reaction is (2R)-3-phosphoglycerate + ATP = (2R)-3-phospho-glyceroyl phosphate + ADP. Its pathway is carbohydrate degradation; glycolysis; pyruvate from D-glyceraldehyde 3-phosphate: step 2/5. The sequence is that of Phosphoglycerate kinase from Buchnera aphidicola subsp. Acyrthosiphon pisum (strain 5A).